The following is a 563-amino-acid chain: Coiled-coil domain-containing protein 38 (563 aa).

The span at 1 to 11 (MSSNLLPTLNS) shows a compositional bias: polar residues. Residues 1–21 (MSSNLLPTLNSGGKVKDGSTK) are disordered. The stretch at 129–212 (KRNTIKKFEK…VKSEIAKTEF (84 aa)) forms a coiled coil. Residues 272–311 (ESGRTAVLSEDASQGRDSQGKPSRSLTRTPEKKKSNLAES) are disordered. A compositionally biased stretch (polar residues) spans 282-299 (DASQGRDSQGKPSRSLTR). 2 coiled-coil regions span residues 384–415 (NIEFLLEQEKMLKANCVREEEKAAELQLKSKL) and 497–522 (RDEKMKEKQRHQQERLKAALEKAVAQ). A disordered region spans residues 522–563 (QPKKKLGRRLVFHSKPPSGNKQQLPLVNETKTKSQEEEYFFT). Over residues 523–533 (PKKKLGRRLVF) the composition is skewed to basic residues.

As to quaternary structure, interacts with CCDC42, CFAP53, IFT88 and ODF2. Interacts with CCDC146. Interacts with TEKT3. Interacts with ubiquitinated histone H2A.

It is found in the cytoplasm. Its subcellular location is the cytoskeleton. It localises to the microtubule organizing center. The protein resides in the centrosome. The protein localises to the perinuclear region. It is found in the cell projection. Its subcellular location is the cilium. It localises to the flagellum. In terms of biological role, essential for male fertility. Required for sperm flagellum biogenesis. Also required for acrosome biogenesis. Required for the attachment of developing acrosomes to the nucleus during spermiogenesis and may be involved in the transport of fibrous sheath components. In Homo sapiens (Human), this protein is Coiled-coil domain-containing protein 38 (CCDC38).